Reading from the N-terminus, the 706-residue chain is Zinc transporter foi (706 aa).

The first 21 residues, 1–21 (MARHIMAVCVVCLLCAHRLHC), serve as a signal peptide directing secretion. Over 22 to 261 (QDHIESLLGP…EKDKDIFYVW (240 aa)) the chain is Extracellular. A compositionally biased stretch (polar residues) spans 40–56 (QDQLNARVYTNLSPSSE). Residues 40-101 (QDQLNARVYT…HGPTSESRVP (62 aa)) are disordered. 6 N-linked (GlcNAc...) asparagine glycosylation sites follow: asparagine 74, asparagine 119, asparagine 176, asparagine 182, asparagine 196, and asparagine 207. A helical transmembrane segment spans residues 262–282 (IYAFISVFACGILGLVGVAII). Topologically, residues 283-292 (PFMGSRYYKY) are cytoplasmic. Residues 293-313 (IIQYLVALAVGTMTGDALLHL) traverse the membrane as a helical segment. Topologically, residues 314-329 (LPHSLAGQDERGMIMK) are extracellular. A helical membrane pass occupies residues 330-350 (GLGCLGGIIFFYVMEHALTMI). The Cytoplasmic segment spans residues 351-604 (SEWRKSVEKK…LIKAGMSVKS (254 aa)). Serine 376, serine 377, and serine 381 each carry phosphoserine. A helical membrane pass occupies residues 605-625 (AVYYNLLTGVLSFIGMIFGIA). Residues 626–631 (FGQSQD) are Extracellular-facing. Residues 632-652 (VAQWMFAVAAGLFIYIALVDM) traverse the membrane as a helical segment. The Cytoplasmic segment spans residues 653 to 665 (MPEISASHKSLGQ). A helical membrane pass occupies residues 666–686 (FLLQILGMLSGVGIMLLIALY). The Extracellular portion of the chain corresponds to 687 to 706 (EGDLMSAFGTAGAASHQHAH).

It belongs to the ZIP transporter (TC 2.A.5) family. Glycosylated. As to expression, maternal foi has almost completely disappeared by embryonic stage 3 except in the pole cells. In stage 6 embryos, expression is enriched in the invaginating mesoderm. In stage 9 embryos, high levels in the anterior and posterior midgut primordia. In stage 14 embryos, broad expression with low levels in the epidermis.

The protein resides in the cell membrane. In terms of biological role, required for the normal migration of longitudinal and peripheral glial cells. During larval development, required for the migration of the subretinal glia into the eye disk. During embryonic development, also controls the migration of muscle cells toward their attachment sites. Required in the mesoderm for the correct morphogenesis of embryonic gonad and for tracheal branch fusion during tracheal development. Shg may be cooperating with foi to mediate a common mechanism for gonad and tracheal morphogenesis. Acts as a zinc transporter in both yeast and mammalian cells. The protein is Zinc transporter foi of Drosophila melanogaster (Fruit fly).